We begin with the raw amino-acid sequence, 163 residues long: Shikimate kinase (163 aa).

ATP is bound at residue 10–15 (GVGKTT). Thr14 contacts Mg(2+). Substrate contacts are provided by Asp28, Arg52, and Gly75. Arg116 serves as a coordination point for ATP. Substrate is bound at residue Arg134. Arg151 lines the ATP pocket.

The protein belongs to the shikimate kinase family. Monomer. The cofactor is Mg(2+).

It is found in the cytoplasm. The enzyme catalyses shikimate + ATP = 3-phosphoshikimate + ADP + H(+). The protein operates within metabolic intermediate biosynthesis; chorismate biosynthesis; chorismate from D-erythrose 4-phosphate and phosphoenolpyruvate: step 5/7. Functionally, catalyzes the specific phosphorylation of the 3-hydroxyl group of shikimic acid using ATP as a cosubstrate. The protein is Shikimate kinase of Streptococcus pyogenes serotype M12 (strain MGAS2096).